A 424-amino-acid polypeptide reads, in one-letter code: Serine--tRNA ligase (424 aa).

Residue 230-232 coordinates L-serine; sequence TAE. 261-263 contributes to the ATP binding site; sequence RSE. Residue E284 coordinates L-serine. An ATP-binding site is contributed by 348 to 351; it reads EISS. S384 contributes to the L-serine binding site.

The protein belongs to the class-II aminoacyl-tRNA synthetase family. Type-1 seryl-tRNA synthetase subfamily. As to quaternary structure, homodimer. The tRNA molecule binds across the dimer.

The protein localises to the cytoplasm. The enzyme catalyses tRNA(Ser) + L-serine + ATP = L-seryl-tRNA(Ser) + AMP + diphosphate + H(+). It catalyses the reaction tRNA(Sec) + L-serine + ATP = L-seryl-tRNA(Sec) + AMP + diphosphate + H(+). It participates in aminoacyl-tRNA biosynthesis; selenocysteinyl-tRNA(Sec) biosynthesis; L-seryl-tRNA(Sec) from L-serine and tRNA(Sec): step 1/1. Functionally, catalyzes the attachment of serine to tRNA(Ser). Is also able to aminoacylate tRNA(Sec) with serine, to form the misacylated tRNA L-seryl-tRNA(Sec), which will be further converted into selenocysteinyl-tRNA(Sec). The sequence is that of Serine--tRNA ligase from Streptococcus pneumoniae (strain 70585).